A 571-amino-acid polypeptide reads, in one-letter code: Proline--tRNA ligase (571 aa).

Belongs to the class-II aminoacyl-tRNA synthetase family. ProS type 1 subfamily. In terms of assembly, homodimer.

Its subcellular location is the cytoplasm. It catalyses the reaction tRNA(Pro) + L-proline + ATP = L-prolyl-tRNA(Pro) + AMP + diphosphate. In terms of biological role, catalyzes the attachment of proline to tRNA(Pro) in a two-step reaction: proline is first activated by ATP to form Pro-AMP and then transferred to the acceptor end of tRNA(Pro). As ProRS can inadvertently accommodate and process non-cognate amino acids such as alanine and cysteine, to avoid such errors it has two additional distinct editing activities against alanine. One activity is designated as 'pretransfer' editing and involves the tRNA(Pro)-independent hydrolysis of activated Ala-AMP. The other activity is designated 'posttransfer' editing and involves deacylation of mischarged Ala-tRNA(Pro). The misacylated Cys-tRNA(Pro) is not edited by ProRS. This is Proline--tRNA ligase from Actinobacillus pleuropneumoniae serotype 7 (strain AP76).